The sequence spans 530 residues: 26S proteasome non-ATPase regulatory subunit 3 (530 aa).

A compositionally biased stretch (basic and acidic residues) spans Met1–Lys16. The disordered stretch occupies residues Met1 to Thr65. The span at Pro17–Pro30 shows a compositional bias: pro residues. Lys36 is covalently cross-linked (Glycyl lysine isopeptide (Lys-Gly) (interchain with G-Cter in SUMO1); alternate). A Glycyl lysine isopeptide (Lys-Gly) (interchain with G-Cter in SUMO2); alternate cross-link involves residue Lys36. Residues Ala282–Asp461 form the PCI domain. Ser414 and Ser426 each carry phosphoserine. Residues Ser496–Pro530 are disordered. Positions Tyr497 to Met521 are enriched in basic and acidic residues.

Belongs to the proteasome subunit S3 family. As to quaternary structure, component of the 19S proteasome regulatory particle complex. The 26S proteasome consists of a 20S core particle (CP) and two 19S regulatory subunits (RP). The regulatory particle is made of a lid composed of 9 subunits including PSMD3, a base containing 6 ATPases and few additional components. Interacts with UBQLN1 (via ubiquitin-like domain). Interacts with ERCC6.

Its function is as follows. Component of the 26S proteasome, a multiprotein complex involved in the ATP-dependent degradation of ubiquitinated proteins. This complex plays a key role in the maintenance of protein homeostasis by removing misfolded or damaged proteins, which could impair cellular functions, and by removing proteins whose functions are no longer required. Therefore, the proteasome participates in numerous cellular processes, including cell cycle progression, apoptosis, or DNA damage repair. The protein is 26S proteasome non-ATPase regulatory subunit 3 (Psmd3) of Mus musculus (Mouse).